The chain runs to 43 residues: Protein PsbN (43 aa).

The chain crosses the membrane as a helical span at residues 5-27; the sequence is TVFSIFISCLLLSLTGYSLYTAF.

This sequence belongs to the PsbN family.

The protein resides in the plastid. Its subcellular location is the chloroplast thylakoid membrane. Functionally, may play a role in photosystem I and II biogenesis. The polypeptide is Protein PsbN (Chlorokybus atmophyticus (Soil alga)).